A 228-amino-acid chain; its full sequence is Calcyclin-binding protein (228 aa).

Met-1 bears the N-acetylmethionine mark. Position 2 is an N-acetylalanine (Ala-2). The tract at residues 2-80 (ASEELQKDLE…YTVKISNYGW (79 aa)) is interaction with SIAH1. Ser-3 carries the post-translational modification Phosphoserine. An N6-acetyllysine mark is found at Lys-8 and Lys-19. Ser-34 bears the Phosphoserine mark. The 95-residue stretch at 73-167 (VKISNYGWDQ…VENTRWDYLT (95 aa)) folds into the CS domain. The tract at residues 73 to 228 (VKISNYGWDQ…EKQAKGDTEF (156 aa)) is interaction with SKP1. N6-acetyllysine occurs at positions 85 and 118. The interaction with S100A6 stretch occupies residues 154-228 (CRKKVENTRW…EKQAKGDTEF (75 aa)). The SGS domain occupies 168–228 (QVEKECKEKE…EKQAKGDTEF (61 aa)).

In terms of assembly, homodimer. Interacts with proteins of the S100 family S100A1, S100A6, S100B, S100P and S100A12 in a calcium-dependent manner. Component of some large E3 complex at least composed of UBE2D1, SIAH1, CACYBP/SIP, SKP1, APC and TBL1X. Interacts directly with SIAH1, SIAH2 and SKP1. Phosphorylated on serine residues. Phosphorylated upon induction by RA or at high calcium concentrations.

It localises to the nucleus. The protein localises to the cytoplasm. Its function is as follows. May be involved in calcium-dependent ubiquitination and subsequent proteasomal degradation of target proteins. Probably serves as a molecular bridge in ubiquitin E3 complexes. Participates in the ubiquitin-mediated degradation of beta-catenin (CTNNB1). This Homo sapiens (Human) protein is Calcyclin-binding protein (CACYBP).